The primary structure comprises 282 residues: 4-diphosphocytidyl-2-C-methyl-D-erythritol kinase (282 aa).

K11 is an active-site residue. 93 to 103 (LVSAGLAGGSA) lines the ATP pocket. D133 is an active-site residue.

This sequence belongs to the GHMP kinase family. IspE subfamily.

The catalysed reaction is 4-CDP-2-C-methyl-D-erythritol + ATP = 4-CDP-2-C-methyl-D-erythritol 2-phosphate + ADP + H(+). The protein operates within isoprenoid biosynthesis; isopentenyl diphosphate biosynthesis via DXP pathway; isopentenyl diphosphate from 1-deoxy-D-xylulose 5-phosphate: step 3/6. Its function is as follows. Catalyzes the phosphorylation of the position 2 hydroxy group of 4-diphosphocytidyl-2C-methyl-D-erythritol. This Ehrlichia canis (strain Jake) protein is 4-diphosphocytidyl-2-C-methyl-D-erythritol kinase.